A 176-amino-acid chain; its full sequence is MTIHIPTWVNGTLQPVEKLEAHLRGLRHKAISVFILRDGDVLLQRRAMGKYHTPGLWANTCCTHPQWDEAGVDCAMRRLDEELGVKDVPLRYRDTVEYRADVGGGLIEHEVVDIFVGEMPSGMEPVMNPEEVMEVEWTPLATLAQRVEASPETFTPWLHIYLRKYADIIFESATDA.

Positions 22 and 28 each coordinate Mn(2+). The region spanning 26 to 160 is the Nudix hydrolase domain; sequence LRHKAISVFI…PETFTPWLHI (135 aa). The active site involves Cys-62. His-64 is a Mn(2+) binding site. Mg(2+) is bound at residue Glu-82. Glu-108 and Glu-110 together coordinate Mn(2+). Glu-110 is an active-site residue.

Belongs to the IPP isomerase type 1 family. Requires Mg(2+) as cofactor. Mn(2+) serves as cofactor.

The protein resides in the cytoplasm. The enzyme catalyses isopentenyl diphosphate = dimethylallyl diphosphate. Its pathway is isoprenoid biosynthesis; dimethylallyl diphosphate biosynthesis; dimethylallyl diphosphate from isopentenyl diphosphate: step 1/1. It participates in porphyrin-containing compound metabolism; chlorophyll biosynthesis. Catalyzes the 1,3-allylic rearrangement of the homoallylic substrate isopentenyl (IPP) to its highly electrophilic allylic isomer, dimethylallyl diphosphate (DMAPP). In Jannaschia sp. (strain CCS1), this protein is Isopentenyl-diphosphate Delta-isomerase.